We begin with the raw amino-acid sequence, 344 residues long: Deoxyhypusine hydroxylase (344 aa).

HEAT-like PBS-type repeat units follow at residues 81 to 107 (LKHE…VLED) and 115 to 140 (RHEA…FRDR). Positions 83, 84, 116, and 117 each coordinate Fe cation. The disordered stretch occupies residues 169–188 (EKLRASDFSSVDPAPPTAQG). HEAT-like PBS-type repeat units lie at residues 210–240 (KRYR…LAKG), 248–274 (FRHE…ALSN), and 281–308 (VRHE…FLHD). Fe cation contacts are provided by H250, E251, H283, and E284.

Belongs to the deoxyhypusine hydroxylase family. The cofactor is Fe(2+).

The protein resides in the cytoplasm. The protein localises to the nucleus. The enzyme catalyses [eIF5A protein]-deoxyhypusine + AH2 + O2 = [eIF5A protein]-hypusine + A + H2O. Its pathway is protein modification; eIF5A hypusination. Its function is as follows. Catalyzes the hydroxylation of the N(6)-(4-aminobutyl)-L-lysine intermediate to form hypusine, an essential post-translational modification only found in mature eIF-5A factor. The chain is Deoxyhypusine hydroxylase from Chaetomium globosum (strain ATCC 6205 / CBS 148.51 / DSM 1962 / NBRC 6347 / NRRL 1970) (Soil fungus).